Here is a 187-residue protein sequence, read N- to C-terminus: Ribosome-recycling factor (187 aa).

This sequence belongs to the RRF family.

The protein localises to the cytoplasm. Functionally, responsible for the release of ribosomes from messenger RNA at the termination of protein biosynthesis. May increase the efficiency of translation by recycling ribosomes from one round of translation to another. The sequence is that of Ribosome-recycling factor from Bradyrhizobium sp. (strain ORS 278).